The chain runs to 163 residues: MKLKAIILATGLINCIAFSAQAVDTTITVTGNVLQRTCNVPGNVDVSLGNLYVSDFPNAGSGSPWVNFDLSLTGCQNMNTVRATFSGTADGQTYYANTGNAGGIKIEIQDRDGSNASYHNGMFKTLNVQNNNATFNLKARAVSKGQVTPGNISSVITVTYTYA.

A signal peptide spans 1–22; it reads MKLKAIILATGLINCIAFSAQA. A disulfide bridge connects residues C38 and C75. Residues 138 to 144 are involved in sialic acid binding; it reads KARAVSK.

It belongs to the fimbrial protein family.

Its subcellular location is the fimbrium. In terms of biological role, fimbriae (also called pili), polar filaments radiating from the surface of the bacterium to a length of 0.5-1.5 micrometers and numbering 100-300 per cell, enable bacteria to colonize the epithelium of specific host organs. Its function is as follows. A minor fimbrial subunit, this protein is necessary for full expression of S-specific binding. S-fimbrial adhesins enable pathogenic E.coli causing urinary-tract infections or newborn meningitis to attach to glycoproteins terminating with alpha-sialic acid-(2-3)-beta-Gal. This protein binds to the alpha-sialic acid-(2-3)-beta-Gal and is thus responsible for erythrocyte recognition and hemagglutination. This chain is S-fimbrial adhesin protein SfaS (sfaS), found in Escherichia coli O6:K15:H31 (strain 536 / UPEC).